The chain runs to 279 residues: Probable endonuclease 4 (279 aa).

9 residues coordinate Zn(2+): His-66, His-106, Glu-142, Asp-176, His-179, His-213, Asp-226, His-228, and Glu-258.

It belongs to the AP endonuclease 2 family. Requires Zn(2+) as cofactor.

The catalysed reaction is Endonucleolytic cleavage to 5'-phosphooligonucleotide end-products.. In terms of biological role, endonuclease IV plays a role in DNA repair. It cleaves phosphodiester bonds at apurinic or apyrimidinic (AP) sites, generating a 3'-hydroxyl group and a 5'-terminal sugar phosphate. The protein is Probable endonuclease 4 of Photobacterium profundum (strain SS9).